The following is a 474-amino-acid chain: Bifunctional protein HldE (474 aa).

The ribokinase stretch occupies residues 1–318 (MKVTLPDFNK…ENAIRGRADN (318 aa)). Residue 195–198 (NMSE) coordinates ATP. Residue D264 is part of the active site. Residues 344–474 (MTNGCFDILH…TNIINAIKKK (131 aa)) are cytidylyltransferase.

It in the N-terminal section; belongs to the carbohydrate kinase PfkB family. This sequence in the C-terminal section; belongs to the cytidylyltransferase family. In terms of assembly, homodimer.

The enzyme catalyses D-glycero-beta-D-manno-heptose 7-phosphate + ATP = D-glycero-beta-D-manno-heptose 1,7-bisphosphate + ADP + H(+). The catalysed reaction is D-glycero-beta-D-manno-heptose 1-phosphate + ATP + H(+) = ADP-D-glycero-beta-D-manno-heptose + diphosphate. Its pathway is nucleotide-sugar biosynthesis; ADP-L-glycero-beta-D-manno-heptose biosynthesis; ADP-L-glycero-beta-D-manno-heptose from D-glycero-beta-D-manno-heptose 7-phosphate: step 1/4. It functions in the pathway nucleotide-sugar biosynthesis; ADP-L-glycero-beta-D-manno-heptose biosynthesis; ADP-L-glycero-beta-D-manno-heptose from D-glycero-beta-D-manno-heptose 7-phosphate: step 3/4. In terms of biological role, catalyzes the phosphorylation of D-glycero-D-manno-heptose 7-phosphate at the C-1 position to selectively form D-glycero-beta-D-manno-heptose-1,7-bisphosphate. Catalyzes the ADP transfer from ATP to D-glycero-beta-D-manno-heptose 1-phosphate, yielding ADP-D-glycero-beta-D-manno-heptose. The protein is Bifunctional protein HldE of Proteus mirabilis (strain HI4320).